Here is a 192-residue protein sequence, read N- to C-terminus: Interleukin-18 (192 aa).

The propeptide occupies 1–35; sequence MAAEPEDNCISFVEMKFINNTLYFVAENDEDLESD.

Belongs to the IL-1 family. Forms a ternary complex with ligand-binding receptor subunit IL18R1 and signaling receptor subunit IL18RAP at the plasma membrane. Mature IL18 first binds to IL18R1 forming a low affinity binary complex, which then interacts with IL18RAP to form a high affinity ternary complex that signals inside the cell. Interacts with cargo receptor TMED10; the interaction mediates the translocation from the cytoplasm into the ERGIC (endoplasmic reticulum-Golgi intermediate compartment) and thereby secretion. In terms of processing, the pro-IL-18 precursor is processed by CASP1, CASP4 or CASP5 to yield its mature, active form. The pro-IL-18 precursor features autoinhibitory interactions between the propeptide and the post-cleavage-site region, preventing recognition by the IL18R1 receptor. Processing by CASP1, CASP4 or CASP5 induces conformational changes to generate critical receptor-binding sites. The mature form is then secreted and released in the extracellular milieu by passing through the gasdermin-D (GSDMD) pore. In contrast, cleavage by CASP3 inactivates IL18.

The protein localises to the cytoplasm. The protein resides in the cytosol. It is found in the secreted. Functionally, pro-inflammatory cytokine primarily involved in epithelial barrier repair, polarized T-helper 1 (Th1) cell and natural killer (NK) cell immune responses. Upon binding to IL18R1 and IL18RAP, forms a signaling ternary complex which activates NF-kappa-B, triggering synthesis of inflammatory mediators. Synergizes with IL12/interleukin-12 to induce IFNG synthesis from T-helper 1 (Th1) cells and natural killer (NK) cells. Involved in transduction of inflammation downstream of pyroptosis: its mature form is specifically released in the extracellular milieu by passing through the gasdermin-D (GSDMD) pore. This chain is Interleukin-18 (IL18), found in Sus scrofa (Pig).